The chain runs to 151 residues: 3-hydroxyacyl-[acyl-carrier-protein] dehydratase FabZ (151 aa).

The active site involves histidine 56.

This sequence belongs to the thioester dehydratase family. FabZ subfamily.

It localises to the cytoplasm. It catalyses the reaction a (3R)-hydroxyacyl-[ACP] = a (2E)-enoyl-[ACP] + H2O. Its function is as follows. Involved in unsaturated fatty acids biosynthesis. Catalyzes the dehydration of short chain beta-hydroxyacyl-ACPs and long chain saturated and unsaturated beta-hydroxyacyl-ACPs. This is 3-hydroxyacyl-[acyl-carrier-protein] dehydratase FabZ from Nitrobacter hamburgensis (strain DSM 10229 / NCIMB 13809 / X14).